The following is a 349-amino-acid chain: Septin-2 (349 aa).

Residues 33–305 enclose the Septin-type G domain; it reads KGFEFTLMVV…ENFRSERLKR (273 aa). Positions 43 to 50 are G1 motif; the sequence is GESGLGKS. GTP is bound by residues 43–50, Thr77, Gly103, 182–190, Gly240, and Arg255; these read GESGLGKS and KADTLTLKE. The tract at residues 100–103 is G3 motif; sequence DTPG. The tract at residues 181-184 is G4 motif; it reads AKAD. Positions 259 to 269 are important for dimerization; the sequence is WGVVEVENPEH.

The protein belongs to the TRAFAC class TrmE-Era-EngA-EngB-Septin-like GTPase superfamily. Septin GTPase family. In terms of assembly, septins polymerize into heterooligomeric protein complexes that form filaments, and associate with cellular membranes, actin filaments and microtubules. GTPase activity is required for filament formation. Can form heterooligomers with other family members and form filaments.

The protein localises to the cytoplasm. It localises to the cytoskeleton. It is found in the spindle. The protein resides in the cleavage furrow. Its subcellular location is the midbody. The protein localises to the cell cortex. It localises to the cell projection. It is found in the cilium membrane. In terms of biological role, filament-forming cytoskeletal GTPase. Required for normal organization of the actin cytoskeleton. Plays a role in the biogenesis of polarized columnar-shaped epithelium by maintaining polyglutamylated microtubules, thus facilitating efficient vesicle transport, and by impeding MAP4 binding to tubulin. Required for the progression through mitosis. Forms a scaffold at the midplane of the mitotic splindle required to maintain CENPE localization at kinetochores and consequently chromosome congression. During anaphase, may be required for chromosome segregation and spindle elongation. Plays a role in ciliogenesis and collective cell movements. In cilia, required for the integrity of the diffusion barrier at the base of the primary cilium that prevents diffusion of transmembrane proteins between the cilia and plasma membranes. This Gallus gallus (Chicken) protein is Septin-2.